The following is a 239-amino-acid chain: DnaA regulatory inactivator Hda (239 aa).

The protein belongs to the DnaA family. HdA subfamily. The active form seems to be an ADP-bound monomer. Forms the RIDA complex (regulatory inactivation of DnaA) of ATP-DnaA, ADP-Hda and the DNA-loaded beta sliding clamp (dnaN).

Its function is as follows. Mediates the interaction of DNA replication initiator protein DnaA with DNA polymerase subunit beta sliding clamp (dnaN). Stimulates hydrolysis of ATP-DnaA to ADP-DnaA, rendering DnaA inactive for reinitiation, a process called regulatory inhibition of DnaA or RIDA. The chain is DnaA regulatory inactivator Hda from Yersinia enterocolitica serotype O:8 / biotype 1B (strain NCTC 13174 / 8081).